Consider the following 215-residue polypeptide: Ribose-5-phosphate isomerase A (215 aa).

Substrate is bound by residues 26 to 29 (TGST), 79 to 82 (DGAD), and 92 to 95 (KGGG). Catalysis depends on E101, which acts as the Proton acceptor. K119 contacts substrate.

It belongs to the ribose 5-phosphate isomerase family. Homodimer.

The catalysed reaction is aldehydo-D-ribose 5-phosphate = D-ribulose 5-phosphate. Its pathway is carbohydrate degradation; pentose phosphate pathway; D-ribose 5-phosphate from D-ribulose 5-phosphate (non-oxidative stage): step 1/1. In terms of biological role, catalyzes the reversible conversion of ribose-5-phosphate to ribulose 5-phosphate. This is Ribose-5-phosphate isomerase A from Xanthomonas oryzae pv. oryzae (strain MAFF 311018).